Here is a 404-residue protein sequence, read N- to C-terminus: UPF0261 protein CTC_01794 (404 aa).

It belongs to the UPF0261 family.

This Clostridium tetani (strain Massachusetts / E88) protein is UPF0261 protein CTC_01794.